Reading from the N-terminus, the 267-residue chain is Alpha-tubulin N-acetyltransferase (267 aa).

In terms of domain architecture, N-acetyltransferase spans 1–197; that stretch reads MDFRAGLENV…NNFVVYSEFF (197 aa). Acetyl-CoA-binding positions include 131-144 and 167-176; these read FYIH…GYGK and SMKMIQFLHK.

This sequence belongs to the acetyltransferase ATAT1 family.

The enzyme catalyses L-lysyl-[alpha-tubulin] + acetyl-CoA = N(6)-acetyl-L-lysyl-[alpha-tubulin] + CoA + H(+). Functionally, specifically acetylates 'Lys-40' in alpha-tubulin on the lumenal side of microtubules. Promotes microtubule destabilization and accelerates microtubule dynamics; this activity may be independent of acetylation activity. Acetylates alpha-tubulin with a slow enzymatic rate, due to a catalytic site that is not optimized for acetyl transfer. Enters the microtubule through each end and diffuses quickly throughout the lumen of microtubules. Acetylates only long/old microtubules because of its slow acetylation rate since it does not have time to act on dynamically unstable microtubules before the enzyme is released. The sequence is that of Alpha-tubulin N-acetyltransferase from Schistosoma japonicum (Blood fluke).